We begin with the raw amino-acid sequence, 505 residues long: tRNA-2-methylthio-N(6)-dimethylallyladenosine synthase (505 aa).

Residues 10–126 (RSYEVRTYGC…LPALLDRARH (117 aa)) enclose the MTTase N-terminal domain. Cysteine 19, cysteine 55, cysteine 89, cysteine 163, cysteine 167, and cysteine 170 together coordinate [4Fe-4S] cluster. One can recognise a Radical SAM core domain in the interval 149-385 (RESAYAGWVS…IALQEQITLE (237 aa)). One can recognise a TRAM domain in the interval 388–459 (QKLVGAEVEL…PHHLVADTPV (72 aa)).

It belongs to the methylthiotransferase family. MiaB subfamily. Monomer. [4Fe-4S] cluster is required as a cofactor.

Its subcellular location is the cytoplasm. It catalyses the reaction N(6)-dimethylallyladenosine(37) in tRNA + (sulfur carrier)-SH + AH2 + 2 S-adenosyl-L-methionine = 2-methylsulfanyl-N(6)-dimethylallyladenosine(37) in tRNA + (sulfur carrier)-H + 5'-deoxyadenosine + L-methionine + A + S-adenosyl-L-homocysteine + 2 H(+). In terms of biological role, catalyzes the methylthiolation of N6-(dimethylallyl)adenosine (i(6)A), leading to the formation of 2-methylthio-N6-(dimethylallyl)adenosine (ms(2)i(6)A) at position 37 in tRNAs that read codons beginning with uridine. The chain is tRNA-2-methylthio-N(6)-dimethylallyladenosine synthase from Rhodococcus jostii (strain RHA1).